A 780-amino-acid polypeptide reads, in one-letter code: ATP-dependent 6-phosphofructokinase, liver type (780 aa).

N-acetylalanine is present on alanine 2. Positions 2-390 are N-terminal catalytic PFK domain 1; that stretch reads ASVDLEKLRT…NWNIYKLLSH (389 aa). ATP-binding positions include glycine 25, 88-89, and 118-121; these read RC and GDGS. Residue aspartate 119 participates in Mg(2+) binding. Substrate contacts are provided by residues 164 to 166, arginine 201, 208 to 210, glutamate 264, arginine 292, and 298 to 301; these read SID, MGR, and HVQR. Aspartate 166 serves as the catalytic Proton acceptor. Serine 377 is modified (phosphoserine). The interdomain linker stretch occupies residues 391–400; sequence QKISKEKTNF. A C-terminal regulatory PFK domain 2 region spans residues 401-780; sequence SLAILNVGAP…RRTLSIETGF (380 aa). Residues arginine 470, 527–531, arginine 565, 572–574, and glutamate 628 each bind beta-D-fructose 2,6-bisphosphate; these read TISNN and MGG. Serine 529 is a glycosylation site (O-linked (GlcNAc) serine). At tyrosine 640 the chain carries Phosphotyrosine. Beta-D-fructose 2,6-bisphosphate is bound by residues arginine 654, 660–663, and arginine 734; that span reads HLQQ. The residue at position 775 (serine 775) is a Phosphoserine.

It belongs to the phosphofructokinase type A (PFKA) family. ATP-dependent PFK group I subfamily. Eukaryotic two domain clade 'E' sub-subfamily. Homo- and heterotetramers. Phosphofructokinase (PFK) enzyme functions as a tetramer composed of different combinations of 3 types of subunits, called PFKM (M), PFKL (L) and PFKP (P). The composition of the PFK tetramer differs according to the tissue type it is present in. The kinetic and regulatory properties of the tetrameric enzyme are dependent on the subunit composition, hence can vary across tissues. Mg(2+) is required as a cofactor. Post-translationally, glcNAcylation at Ser-529 by OGT decreases enzyme activity, leading to redirect glucose flux through the oxidative pentose phosphate pathway. Glycosylation is stimulated by both hypoxia and glucose deprivation.

The protein localises to the cytoplasm. The enzyme catalyses beta-D-fructose 6-phosphate + ATP = beta-D-fructose 1,6-bisphosphate + ADP + H(+). Its pathway is carbohydrate degradation; glycolysis; D-glyceraldehyde 3-phosphate and glycerone phosphate from D-glucose: step 3/4. With respect to regulation, allosterically activated by ADP, AMP, or fructose 2,6-bisphosphate, and allosterically inhibited by ATP or citrate. GlcNAcylation by OGT overcomes allosteric regulation. In terms of biological role, catalyzes the phosphorylation of D-fructose 6-phosphate to fructose 1,6-bisphosphate by ATP, the first committing step of glycolysis. Negatively regulates the phagocyte oxidative burst in response to bacterial infection by controlling cellular NADPH biosynthesis and NADPH oxidase-derived reactive oxygen species. Upon macrophage activation, drives the metabolic switch toward glycolysis, thus preventing glucose turnover that produces NADPH via pentose phosphate pathway. This chain is ATP-dependent 6-phosphofructokinase, liver type (PFKL), found in Bos taurus (Bovine).